The primary structure comprises 347 residues: Phenylalanine--tRNA ligase alpha subunit (347 aa).

Glu265 contacts Mg(2+).

Belongs to the class-II aminoacyl-tRNA synthetase family. Phe-tRNA synthetase alpha subunit type 1 subfamily. Tetramer of two alpha and two beta subunits. Mg(2+) serves as cofactor.

It is found in the cytoplasm. The enzyme catalyses tRNA(Phe) + L-phenylalanine + ATP = L-phenylalanyl-tRNA(Phe) + AMP + diphosphate + H(+). This is Phenylalanine--tRNA ligase alpha subunit from Mycolicibacterium vanbaalenii (strain DSM 7251 / JCM 13017 / BCRC 16820 / KCTC 9966 / NRRL B-24157 / PYR-1) (Mycobacterium vanbaalenii).